A 110-amino-acid polypeptide reads, in one-letter code: Parvalbumin alpha (110 aa).

Residue serine 2 is modified to N-acetylserine. Residues serine 2 and serine 24 each carry the phosphoserine modification. EF-hand domains follow at residues 39-74 (KSPE…FSPD) and 78-110 (LSVK…VAES). Ca(2+)-binding residues include aspartate 52, aspartate 54, serine 56, phenylalanine 58, glutamate 60, glutamate 63, aspartate 91, aspartate 93, aspartate 95, lysine 97, and glutamate 102.

The protein belongs to the parvalbumin family.

Functionally, in muscle, parvalbumin is thought to be involved in relaxation after contraction. It binds two calcium ions. The chain is Parvalbumin alpha (PVALB) from Bos taurus (Bovine).